A 163-amino-acid chain; its full sequence is MEKRILGLDPGLAILGFGAITCTPGLTQLQSTKVNVLDFGVIKTSADIEIGQRLCTLFDDLHTVIDQLQPDVVAIEKLFFYRMSSTIVVAQARGVVMLALAQHHLPYVEFTPAQIKLALTGYGNADKSEVQEAVARELDLAEIPRPDDAADALAVALTAWYQM.

Catalysis depends on residues Asp-9, Glu-76, and Asp-148. Mg(2+) contacts are provided by Asp-9, Glu-76, and Asp-148.

The protein belongs to the RuvC family. In terms of assembly, homodimer which binds Holliday junction (HJ) DNA. The HJ becomes 2-fold symmetrical on binding to RuvC with unstacked arms; it has a different conformation from HJ DNA in complex with RuvA. In the full resolvosome a probable DNA-RuvA(4)-RuvB(12)-RuvC(2) complex forms which resolves the HJ. Mg(2+) is required as a cofactor.

The protein resides in the cytoplasm. It catalyses the reaction Endonucleolytic cleavage at a junction such as a reciprocal single-stranded crossover between two homologous DNA duplexes (Holliday junction).. Its function is as follows. The RuvA-RuvB-RuvC complex processes Holliday junction (HJ) DNA during genetic recombination and DNA repair. Endonuclease that resolves HJ intermediates. Cleaves cruciform DNA by making single-stranded nicks across the HJ at symmetrical positions within the homologous arms, yielding a 5'-phosphate and a 3'-hydroxyl group; requires a central core of homology in the junction. The consensus cleavage sequence is 5'-(A/T)TT(C/G)-3'. Cleavage occurs on the 3'-side of the TT dinucleotide at the point of strand exchange. HJ branch migration catalyzed by RuvA-RuvB allows RuvC to scan DNA until it finds its consensus sequence, where it cleaves and resolves the cruciform DNA. The protein is Crossover junction endodeoxyribonuclease RuvC of Nostoc sp. (strain PCC 7120 / SAG 25.82 / UTEX 2576).